Consider the following 634-residue polypeptide: Pentatricopeptide repeat-containing protein At5g14080 (634 aa).

13 PPR repeats span residues 81–115, 116–150, 151–185, 186–220, 222–256, 257–291, 292–326, 327–360, 361–395, 396–430, 431–465, 466–500, and 501–535; these read DSIS…KILL, DSSV…GQEI, HPDV…GVSL, NTLG…NLNI, GSII…DCKP, DFMA…GVAP, RSSD…KFPM, DNDI…GKLP, AIRT…GYFS, ELQS…GLAP, DVSL…GCKM, NLTT…GIEP, and DETI…DHKT.

Belongs to the PPR family. P subfamily.

The sequence is that of Pentatricopeptide repeat-containing protein At5g14080 from Arabidopsis thaliana (Mouse-ear cress).